We begin with the raw amino-acid sequence, 497 residues long: Squalene monooxygenase (497 aa).

Residues valine 29–valine 30, glutamate 49–arginine 50, arginine 57, arginine 159, valine 175, aspartate 336, and methionine 349 each bind FAD. Transmembrane regions (helical) follow at residues phenylalanine 434–leucine 454 and leucine 467–phenylalanine 487.

This sequence belongs to the squalene monooxygenase family. Requires FAD as cofactor.

It is found in the microsome membrane. The protein localises to the endoplasmic reticulum membrane. The catalysed reaction is squalene + reduced [NADPH--hemoprotein reductase] + O2 = (S)-2,3-epoxysqualene + oxidized [NADPH--hemoprotein reductase] + H2O + H(+). The protein operates within terpene metabolism; lanosterol biosynthesis; lanosterol from farnesyl diphosphate: step 2/3. Catalyzes the stereospecific oxidation of squalene to (S)-2,3-epoxysqualene, and is considered to be a rate-limiting enzyme in steroid biosynthesis. In Eremothecium gossypii (strain ATCC 10895 / CBS 109.51 / FGSC 9923 / NRRL Y-1056) (Yeast), this protein is Squalene monooxygenase (ERG1).